The sequence spans 520 residues: NLFGNNSYVYYYQSAFRPPDGWHLHGGAYEVVNVSTESSNAGTNGCTVGAIYWSKNFSAASVAMTAPQNGMSWSTGQFCTAHCNFTDFVVFVTHCYKSGPGSCPLTGLIPQNHIRISAMKSGSLFYNLTVAVTKYPRFKSLQCVNNMTSVYLNGDLVFTSNETKDVSAAGVHFKAGGPITYKVMREVKALAYFVNGTAQDVILCDGSPTGLLACQYNTGNFSDGFYPFTNSSLVKEKFIVYRESSVNTTLELTNFTFSNVSNATPNTGGVQTIQLYQTKTAQSGYYNLNFSFLSSFSYKASDYMYGSYHPSCKFRLETINNGFWFNPLSVSLGYGPIQGGCKQSVFANRATCCYAYSYNGPSLCKGVYRGELTKSFECGLLVFVTKTDGSRIQTRNEPFTLTQHNYNNITLDRCVEYNIYGRVGQGFITNVTNYAINYNYLADGGMAILDTSGAIDIFVVQGEYGLNYYKVNPCEDVNQQFVVSGGKLVGILTSRNETGSQPLENQFYIKIINGTRRSRR.

Over 1-520 (NLFGNNSYVY…IINGTRRSRR (520 aa)) the chain is Extracellular. N-linked (GlcNAc...) asparagine; by host glycosylation is found at Asn5, Asn33, Asn56, Asn84, Asn127, Asn146, Asn161, Asn195, Asn220, Asn230, Asn247, Asn254, Asn259, Asn289, Asn408, Asn430, Asn496, and Asn513.

It belongs to the coronaviruses spike protein family. Homotrimer; each monomer consists of a S1 and a S2 subunit. The resulting peplomers protrude from the virus surface as spikes. Specific enzymatic cleavages in vivo yield mature proteins. The precursor is processed into S1 and S2 by host cell furin or furin-like protease to yield the mature S1 and S2 proteins. The cleavage site between S1 and S2 requires the optimal sequence [KR]-X-[KR]-R. Cleavage is not necessary for virus-cell fusion.

Its subcellular location is the virion membrane. It is found in the host endoplasmic reticulum-Golgi intermediate compartment membrane. S1 attaches the virion to the cell membrane by interacting with cell receptors, initiating the infection. This chain is Spike glycoprotein (S), found in Avian infectious bronchitis virus (strain UK/167/84) (IBV).